Here is a 609-residue protein sequence, read N- to C-terminus: Arginine--tRNA ligase (609 aa).

Residues 114 to 124 (VNPNKELHVGH) carry the 'HIGH' region motif.

It belongs to the class-I aminoacyl-tRNA synthetase family. Monomer.

Its subcellular location is the cytoplasm. It catalyses the reaction tRNA(Arg) + L-arginine + ATP = L-arginyl-tRNA(Arg) + AMP + diphosphate. This Deinococcus radiodurans (strain ATCC 13939 / DSM 20539 / JCM 16871 / CCUG 27074 / LMG 4051 / NBRC 15346 / NCIMB 9279 / VKM B-1422 / R1) protein is Arginine--tRNA ligase.